Reading from the N-terminus, the 151-residue chain is Extracellular globin-4 (151 aa).

The Globin domain maps to 6–151 (CCSYEDRREI…LVARIAKDLP (146 aa)). The cysteines at positions 7 and 138 are disulfide-linked. His101 lines the heme b pocket.

This sequence belongs to the globin family. In terms of assembly, the extracellular hemoglobin of the earthworm consists of 12 subunits that have a hexagonal bilayer structure with a molecular weight near 3.8 million. Each one-twelfth subunit is composed primarily of disulfide linked trimers (chains A, B, and C) and monomers (chain D).

The protein localises to the secreted. This Lumbricus terrestris (Common earthworm) protein is Extracellular globin-4.